We begin with the raw amino-acid sequence, 425 residues long: AFP homolog 2 (425 aa).

Disordered regions lie at residues 1 to 207 (MDDD…SGTE) and 288 to 327 (PFAG…DNSN). The interval 7–17 (LELSLGLSCGG) is necessary and sufficient for the interaction with TOPLESS. The segment covering 20–34 (GKAKGNNNNNAGSSS) has biased composition (low complexity). Positions 37–54 (YRAEGGDRSAKVIDDFKN) are enriched in basic and acidic residues. The span at 66-81 (PSSGSQRSDSGQQPPQ) shows a compositional bias: low complexity. A compositionally biased stretch (basic and acidic residues) spans 124–140 (NDDKKKEKDSSHVDMHE). Polar residues-rich tracts occupy residues 146-158 (SHVS…GSTA), 185-197 (TDTN…TGQR), and 288-299 (PFAGRVPSNSAT). Positions 322–425 (TGDNSNLNTA…MGMTAASAHT (104 aa)) are necessary and sufficient for the interaction with the JAZ proteins.

The protein belongs to the Ninja family. As to quaternary structure, component of a complex at least composed of TOPLESS, TPR2, TPR3, TIFY4B/PPD2, MYC3/ATR2 and TIFY3B/JAZ12. Interacts (via C-terminus) with TIFY10A/JAZ1; TIFY10B/JAZ2; TIFY6B/JAZ3; TIFY6A/JAZ4; TIFY11A/JAZ5; TIFY11B/JAZ6; TIFY7/JAZ9; TIFY9/JAZ10; TIFY3A/JAZ11; TIFY3B/JAZ12; TIFY4A/PPD1; TIFY4B/PPD2 and TIFY8 (via TIFY domain). Interacts with TOPLESS. Interacts with PAT1H1.

The protein localises to the nucleus. Acts as a transcriptional repressor. Negative regulator of jasmonate responses. Connects the JAZ proteins and the non-JAZ protein TIFY8 with the TOPLESS corepressors. This is AFP homolog 2 from Arabidopsis thaliana (Mouse-ear cress).